Here is a 508-residue protein sequence, read N- to C-terminus: Cytochrome c-552 (508 aa).

The N-terminal stretch at 1-23 (MNKSYKILLTGSVIAIGAMGLMA) is a signal peptide. H103 contributes to the heme c binding site. Residues C131, C134, and K135 each coordinate heme. Residues C169, C172, H173, C211, C214, and H215 each coordinate heme c. Ca(2+) is bound by residues E217, Y218, K274, and Q276. Y218 provides a ligand contact to substrate. Position 277 (H277) interacts with substrate. Residues H288, C295, C298, H299, H313, C326, C329, H330, and H405 each coordinate heme c. The segment at 485-508 (GRLDPKTLEGMSNKSSWSQTELSQ) is disordered. The segment covering 494 to 508 (GMSNKSSWSQTELSQ) has biased composition (polar residues).

The protein belongs to the cytochrome c-552 family. Ca(2+) serves as cofactor. It depends on heme c as a cofactor.

The protein localises to the periplasm. The catalysed reaction is 6 Fe(III)-[cytochrome c] + NH4(+) + 2 H2O = 6 Fe(II)-[cytochrome c] + nitrite + 8 H(+). The protein operates within nitrogen metabolism; nitrate reduction (assimilation). In terms of biological role, catalyzes the reduction of nitrite to ammonia, consuming six electrons in the process. The polypeptide is Cytochrome c-552 (Desulfotalea psychrophila (strain LSv54 / DSM 12343)).